Consider the following 224-residue polypeptide: PKHD-type hydroxylase CYB_2270 (224 aa).

The 99-residue stretch at 78-176 (LIHSILISCY…RYAAVSWVQS (99 aa)) folds into the Fe2OG dioxygenase domain. H96, D98, and H157 together coordinate Fe cation. Position 167 (R167) interacts with 2-oxoglutarate.

Fe(2+) is required as a cofactor. The cofactor is L-ascorbate.

The sequence is that of PKHD-type hydroxylase CYB_2270 from Synechococcus sp. (strain JA-2-3B'a(2-13)) (Cyanobacteria bacterium Yellowstone B-Prime).